The following is a 245-amino-acid chain: 2,3-bisphosphoglycerate-dependent phosphoglycerate mutase (245 aa).

Residues Arg8–Asn15, Thr21–Gly22, Arg60, Glu87–Tyr90, Lys98, Arg114–Arg115, and Gly183–Asn184 contribute to the substrate site. His9 serves as the catalytic Tele-phosphohistidine intermediate. Residue Glu87 is the Proton donor/acceptor of the active site.

It belongs to the phosphoglycerate mutase family. BPG-dependent PGAM subfamily.

It catalyses the reaction (2R)-2-phosphoglycerate = (2R)-3-phosphoglycerate. Its pathway is carbohydrate degradation; glycolysis; pyruvate from D-glyceraldehyde 3-phosphate: step 3/5. Its function is as follows. Catalyzes the interconversion of 2-phosphoglycerate and 3-phosphoglycerate. The protein is 2,3-bisphosphoglycerate-dependent phosphoglycerate mutase of Bacillus anthracis (strain A0248).